The following is a 331-amino-acid chain: Holliday junction branch migration complex subunit RuvB (331 aa).

Residues 1–182 (MDDRMVDQAL…FGVHLRLEYY (182 aa)) are large ATPase domain (RuvB-L). Residues leucine 21, arginine 22, glycine 63, lysine 66, threonine 67, threonine 68, 129–131 (EDF), arginine 172, tyrosine 182, and arginine 219 contribute to the ATP site. Threonine 67 contacts Mg(2+). The tract at residues 183–253 (NENDLKEIII…TTKQALQLLQ (71 aa)) is small ATPAse domain (RuvB-S). Residues 256 to 331 (AEGLDYIDHK…AYEHFKNFNK (76 aa)) form a head domain (RuvB-H) region. DNA-binding residues include arginine 292, arginine 311, and arginine 316.

Belongs to the RuvB family. Homohexamer. Forms an RuvA(8)-RuvB(12)-Holliday junction (HJ) complex. HJ DNA is sandwiched between 2 RuvA tetramers; dsDNA enters through RuvA and exits via RuvB. An RuvB hexamer assembles on each DNA strand where it exits the tetramer. Each RuvB hexamer is contacted by two RuvA subunits (via domain III) on 2 adjacent RuvB subunits; this complex drives branch migration. In the full resolvosome a probable DNA-RuvA(4)-RuvB(12)-RuvC(2) complex forms which resolves the HJ.

It is found in the cytoplasm. The catalysed reaction is ATP + H2O = ADP + phosphate + H(+). Functionally, the RuvA-RuvB-RuvC complex processes Holliday junction (HJ) DNA during genetic recombination and DNA repair, while the RuvA-RuvB complex plays an important role in the rescue of blocked DNA replication forks via replication fork reversal (RFR). RuvA specifically binds to HJ cruciform DNA, conferring on it an open structure. The RuvB hexamer acts as an ATP-dependent pump, pulling dsDNA into and through the RuvAB complex. RuvB forms 2 homohexamers on either side of HJ DNA bound by 1 or 2 RuvA tetramers; 4 subunits per hexamer contact DNA at a time. Coordinated motions by a converter formed by DNA-disengaged RuvB subunits stimulates ATP hydrolysis and nucleotide exchange. Immobilization of the converter enables RuvB to convert the ATP-contained energy into a lever motion, pulling 2 nucleotides of DNA out of the RuvA tetramer per ATP hydrolyzed, thus driving DNA branch migration. The RuvB motors rotate together with the DNA substrate, which together with the progressing nucleotide cycle form the mechanistic basis for DNA recombination by continuous HJ branch migration. Branch migration allows RuvC to scan DNA until it finds its consensus sequence, where it cleaves and resolves cruciform DNA. This is Holliday junction branch migration complex subunit RuvB from Staphylococcus haemolyticus (strain JCSC1435).